We begin with the raw amino-acid sequence, 350 residues long: Hydroxymethylglutaryl-CoA synthase (350 aa).

Glutamate 83 functions as the Proton donor/acceptor in the catalytic mechanism. The active-site Acyl-thioester intermediate is cysteine 115. (3S)-3-hydroxy-3-methylglutaryl-CoA-binding residues include cysteine 115 and threonine 156. Position 204 (arginine 204) interacts with CoA. (3S)-3-hydroxy-3-methylglutaryl-CoA is bound by residues threonine 206 and histidine 239. Histidine 239 functions as the Proton donor/acceptor in the catalytic mechanism. Lysine 244 contributes to the CoA binding site. (3S)-3-hydroxy-3-methylglutaryl-CoA is bound by residues asparagine 271 and serine 301.

The protein belongs to the thiolase-like superfamily. Archaeal HMG-CoA synthase family. In terms of assembly, interacts with acetoacetyl-CoA thiolase that catalyzes the precedent step in the pathway and with a DUF35 protein. The acetoacetyl-CoA thiolase/HMG-CoA synthase complex channels the intermediate via a fused CoA-binding site, which allows for efficient coupling of the endergonic thiolase reaction with the exergonic HMGCS reaction.

It catalyses the reaction acetoacetyl-CoA + acetyl-CoA + H2O = (3S)-3-hydroxy-3-methylglutaryl-CoA + CoA + H(+). It functions in the pathway metabolic intermediate biosynthesis; (R)-mevalonate biosynthesis; (R)-mevalonate from acetyl-CoA: step 2/3. Its function is as follows. Catalyzes the condensation of acetyl-CoA with acetoacetyl-CoA to form 3-hydroxy-3-methylglutaryl-CoA (HMG-CoA). Functions in the mevalonate (MVA) pathway leading to isopentenyl diphosphate (IPP), a key precursor for the biosynthesis of isoprenoid compounds that are building blocks of archaeal membrane lipids. The chain is Hydroxymethylglutaryl-CoA synthase from Pyrococcus horikoshii (strain ATCC 700860 / DSM 12428 / JCM 9974 / NBRC 100139 / OT-3).